An 862-amino-acid chain; its full sequence is Rab GTPase-binding effector protein 1 (862 aa).

Position 2 is an N-acetylalanine (alanine 2). A coiled-coil region spans residues 11 to 345; the sequence is DVSLQQRVAE…KKTDTEEEVK (335 aa). Residue lysine 282 is modified to N6-acetyllysine. Residues 315–374 form a disordered region; sequence ELKKKDQEEDEQQRVNKRKDNKKTDTEEEVKIPVVCALTQEESSTPLSNEEEHLDSTHGS. Over residues 336–345 the composition is skewed to basic and acidic residues; that stretch reads KKTDTEEEVK. Phosphoserine is present on residues serine 374, serine 377, and serine 407. The residue at position 408 (threonine 408) is a Phosphothreonine. Serine 410 is subject to Phosphoserine. A coiled-coil region spans residues 534–816; it reads DMCSNYEKQL…LQTELDVSEQ (283 aa).

This sequence belongs to the rabaptin family. Heterodimer with RABGEF1. The heterodimer binds RAB4A and RAB5A that have been activated by GTP-binding. Interacts with TSC2. Interacts with GGA1 (via GAE domain), GGA2 (via GAE domain) and GGA3 (via GAE domain). Interacts with AP1G1 (via GAE domain). Interacts with AP1G2 (via GAE domain). Interacts with ECPAS. Interacts with KCNH1. Interacts with PKD1 (via C-terminal domain) and GGA1; the interactions recruit PKD1:PKD2 complex to GGA1 and ARL3 at trans-Golgi network. Interacts with KCNH1. Post-translationally, proteolytic cleavage by caspases in apoptotic cells causes loss of endosome fusion activity.

It localises to the cytoplasm. It is found in the early endosome. The protein resides in the recycling endosome. Its subcellular location is the cytoplasmic vesicle. Rab effector protein acting as linker between gamma-adaptin, RAB4A and RAB5A. Involved in endocytic membrane fusion and membrane trafficking of recycling endosomes. Involved in KCNH1 channels trafficking to and from the cell membrane. Stimulates RABGEF1 mediated nucleotide exchange on RAB5A. Mediates the traffic of PKD1:PKD2 complex from the endoplasmic reticulum through the Golgi to the cilium. The chain is Rab GTPase-binding effector protein 1 (Rabep1) from Mus musculus (Mouse).